Reading from the N-terminus, the 100-residue chain is Large ribosomal subunit protein uL23 (100 aa).

This sequence belongs to the universal ribosomal protein uL23 family. In terms of assembly, part of the 50S ribosomal subunit. Contacts protein L29, and trigger factor when it is bound to the ribosome.

Functionally, one of the early assembly proteins it binds 23S rRNA. One of the proteins that surrounds the polypeptide exit tunnel on the outside of the ribosome. Forms the main docking site for trigger factor binding to the ribosome. This is Large ribosomal subunit protein uL23 from Escherichia coli O157:H7.